Here is a 205-residue protein sequence, read N- to C-terminus: MSRFTGPRLKVMRALGIDLPGLSRKTIEARPTPPGQHGAKNTRRKKSDFGVKLQEKQKLRFNYGLSEKQLRRLMVDARKGKSPTGETLLQLLERRLDNVVFRAGFAPTIAAARQLVTHRHVMLNGKSVNIPSIRVRVGDEISLKASSTKLPIVVETLANPPLTRPEWISWAEQSQQAKVAHLPAAEDVPFPVDVQQVVEYYANRL.

Residues 25–48 (KTIEARPTPPGQHGAKNTRRKKSD) are disordered. The S4 RNA-binding domain maps to 94–157 (RRLDNVVFRA…TKLPIVVETL (64 aa)).

This sequence belongs to the universal ribosomal protein uS4 family. Part of the 30S ribosomal subunit. Contacts protein S5. The interaction surface between S4 and S5 is involved in control of translational fidelity.

In terms of biological role, one of the primary rRNA binding proteins, it binds directly to 16S rRNA where it nucleates assembly of the body of the 30S subunit. Its function is as follows. With S5 and S12 plays an important role in translational accuracy. The sequence is that of Small ribosomal subunit protein uS4 from Methylobacillus flagellatus (strain ATCC 51484 / DSM 6875 / VKM B-1610 / KT).